Consider the following 539-residue polypeptide: GMP synthase [glutamine-hydrolyzing] (539 aa).

The 199-residue stretch at 4 to 202 (KVLILDFGSQ…VLEIAGAKPD (199 aa)) folds into the Glutamine amidotransferase type-1 domain. The active-site Nucleophile is the Cys-81. Residues His-176 and Glu-178 contribute to the active site. One can recognise a GMPS ATP-PPase domain in the interval 203 to 395 (WVMRDHIDEA…LGLPHEMVYR (193 aa)). Residue 230 to 236 (SGGVDSS) coordinates ATP.

As to quaternary structure, homodimer.

It carries out the reaction XMP + L-glutamine + ATP + H2O = GMP + L-glutamate + AMP + diphosphate + 2 H(+). It participates in purine metabolism; GMP biosynthesis; GMP from XMP (L-Gln route): step 1/1. In terms of biological role, catalyzes the synthesis of GMP from XMP. The chain is GMP synthase [glutamine-hydrolyzing] from Ralstonia pickettii (strain 12J).